The following is a 617-amino-acid chain: MNKYPLLSLINSPDDLRLLSKDKLPQLCQELRSYLLESVSQSSGHLASGLGTVELTVALHYVFKTPFDQLLWDVGHQAYPHKILTGRRDKMSTIRQKGGLHPFPWREESEFDVLSVGHSSTSISAGLGIAIAAQKENLGRKTICVIGDGAITAGMAFEALNHAGSVHTDMLVILNDNEMSISENVGALNNHLARLLSGSIYSTLRESGKKILSGLPPIKEFVKKTEEHVKGFVSPVGTLFEQLGFNYIGPIDGHNIHELISTLKNMQSLSGPQFLHIKTKKGKGYAPAEKDPIGFHGVPKFDHKLGELPKSSTTPTYSQIFGSWLCEIAVQDEKLIGITPAMREGSGMVEFSQQFPQQYFDVAIAEQHAVTFAAGLAIAGYKPVVAIYSTFLQRAYDQLIHDVAIQNLPVLFAIDRAGIVGADGQTHQGAFDLSFMRCIPNLVIMTPSNENECRQMLYTGYKCGKPAAVRYPRGNAIGVKLEPLAELPLGKSKLIRQGKNIAILNFGTLLSEATKVAEDLDATVVDMRFVKPLDTQRIQEIAQTHSLIVTLEENAIQGGAGSAVAETLYQQQQKVSLLQLGLPDNFIPQGTQKEMLAELKLNAEGIFEQIKQFLQKI.

Thiamine diphosphate contacts are provided by residues His76 and 117 to 119 (GHS). A Mg(2+)-binding site is contributed by Asp148. Thiamine diphosphate contacts are provided by residues 149-150 (GA), Asn177, Tyr285, and Glu366. Mg(2+) is bound at residue Asn177.

The protein belongs to the transketolase family. DXPS subfamily. As to quaternary structure, homodimer. Mg(2+) is required as a cofactor. Requires thiamine diphosphate as cofactor.

It carries out the reaction D-glyceraldehyde 3-phosphate + pyruvate + H(+) = 1-deoxy-D-xylulose 5-phosphate + CO2. The protein operates within metabolic intermediate biosynthesis; 1-deoxy-D-xylulose 5-phosphate biosynthesis; 1-deoxy-D-xylulose 5-phosphate from D-glyceraldehyde 3-phosphate and pyruvate: step 1/1. Its function is as follows. Catalyzes the acyloin condensation reaction between C atoms 2 and 3 of pyruvate and glyceraldehyde 3-phosphate to yield 1-deoxy-D-xylulose-5-phosphate (DXP). The sequence is that of 1-deoxy-D-xylulose-5-phosphate synthase from Histophilus somni (strain 129Pt) (Haemophilus somnus).